Reading from the N-terminus, the 183-residue chain is ATP synthase subunit delta (183 aa).

Belongs to the ATPase delta chain family. In terms of assembly, F-type ATPases have 2 components, F(1) - the catalytic core - and F(0) - the membrane proton channel. F(1) has five subunits: alpha(3), beta(3), gamma(1), delta(1), epsilon(1). F(0) has three main subunits: a(1), b(2) and c(10-14). The alpha and beta chains form an alternating ring which encloses part of the gamma chain. F(1) is attached to F(0) by a central stalk formed by the gamma and epsilon chains, while a peripheral stalk is formed by the delta and b chains.

The protein resides in the cell membrane. In terms of biological role, f(1)F(0) ATP synthase produces ATP from ADP in the presence of a proton or sodium gradient. F-type ATPases consist of two structural domains, F(1) containing the extramembraneous catalytic core and F(0) containing the membrane proton channel, linked together by a central stalk and a peripheral stalk. During catalysis, ATP synthesis in the catalytic domain of F(1) is coupled via a rotary mechanism of the central stalk subunits to proton translocation. This protein is part of the stalk that links CF(0) to CF(1). It either transmits conformational changes from CF(0) to CF(1) or is implicated in proton conduction. The polypeptide is ATP synthase subunit delta (Mesoplasma florum (strain ATCC 33453 / NBRC 100688 / NCTC 11704 / L1) (Acholeplasma florum)).